The sequence spans 603 residues: UvrABC system protein C (603 aa).

Residues 15-92 (DQPGCYLMKD…IKKHDPRFNI (78 aa)) enclose the GIY-YIG domain. A UVR domain is found at 197–232 (KTVKNDLMKKMQEAAENMEFEKAGEFRDQINAIETT).

It belongs to the UvrC family. As to quaternary structure, interacts with UvrB in an incision complex.

The protein localises to the cytoplasm. Functionally, the UvrABC repair system catalyzes the recognition and processing of DNA lesions. UvrC both incises the 5' and 3' sides of the lesion. The N-terminal half is responsible for the 3' incision and the C-terminal half is responsible for the 5' incision. The sequence is that of UvrABC system protein C from Listeria innocua serovar 6a (strain ATCC BAA-680 / CLIP 11262).